Consider the following 504-residue polypeptide: Glutamate--tRNA ligase (504 aa).

The short motif at 25–35 (PSPTGNPHVGL) is the 'HIGH' region element. Positions 122, 124, 149, and 151 each coordinate Zn(2+). Residues 270–274 (KLSKR) carry the 'KMSKS' region motif. An ATP-binding site is contributed by Lys273.

This sequence belongs to the class-I aminoacyl-tRNA synthetase family. Glutamate--tRNA ligase type 1 subfamily. Monomer. Zn(2+) is required as a cofactor.

The protein localises to the cytoplasm. The enzyme catalyses tRNA(Glu) + L-glutamate + ATP = L-glutamyl-tRNA(Glu) + AMP + diphosphate. Its function is as follows. Catalyzes the attachment of glutamate to tRNA(Glu) in a two-step reaction: glutamate is first activated by ATP to form Glu-AMP and then transferred to the acceptor end of tRNA(Glu). The protein is Glutamate--tRNA ligase of Streptomyces griseus subsp. griseus (strain JCM 4626 / CBS 651.72 / NBRC 13350 / KCC S-0626 / ISP 5235).